The chain runs to 88 residues: Small ribosomal subunit protein uS17 (88 aa).

Belongs to the universal ribosomal protein uS17 family. As to quaternary structure, part of the 30S ribosomal subunit.

Its function is as follows. One of the primary rRNA binding proteins, it binds specifically to the 5'-end of 16S ribosomal RNA. The sequence is that of Small ribosomal subunit protein uS17 from Syntrophotalea carbinolica (strain DSM 2380 / NBRC 103641 / GraBd1) (Pelobacter carbinolicus).